The primary structure comprises 371 residues: Opsin, ultraviolet-sensitive (371 aa).

Topologically, residues 1–52 (MSNDSIHWEARYLPAGPPRLLGWNVPAEELIHIPEHWLVYPEPNPSLHYLLA) are extracellular. Residue Asn3 is glycosylated (N-linked (GlcNAc...) asparagine). The chain crosses the membrane as a helical span at residues 53–73 (LLYILFTFLALLGNGLVIWIF). Residues 74-84 (CAAKSLRTPSN) are Cytoplasmic-facing. Residues 85–105 (MFVVNLAICDFFMMIKTPIFI) form a helical membrane-spanning segment. At 106 to 121 (YNSFNTGFALGNLGCQ) the chain is on the extracellular side. Residues Cys120 and Cys197 are joined by a disulfide bond. A helical transmembrane segment spans residues 122-142 (IFAVIGSLTGIGAAITNAAIA). Topologically, residues 143–161 (YDRYSTIARPLDGKLSRGQ) are cytoplasmic. Residues 162 to 182 (VILFIVLIWTYTIPWALMPVM) traverse the membrane as a helical segment. Over 183 to 209 (GVWGRFVPEGFLTSCSFDYLTDTNEIR) the chain is Extracellular. Residues 210–230 (IFVATIFTFSYCIPMILIIYY) form a helical membrane-spanning segment. The Cytoplasmic segment spans residues 231–278 (YSQIVSHVVNHEKALREQAKKMNVDSLRSNANTSSQSAEIRIAKAAIT). A helical membrane pass occupies residues 279–299 (ICFLYVLSWTPYGVMSMIGAF). Topologically, residues 300-302 (GNK) are extracellular. A helical transmembrane segment spans residues 303-323 (ALLTPGVTMIPACTCKAVACL). Lys318 carries the N6-(retinylidene)lysine modification. The Cytoplasmic segment spans residues 324–371 (DPYVYAISHPKYRLELQKRLPWLELQEKPISDSTSTTTETVNTPPASS).

The protein belongs to the G-protein coupled receptor 1 family. Opsin subfamily. Phosphorylated on some or all of the serine and threonine residues present in the C-terminal region. Expressed in the dorsal region of the retina.

The protein resides in the membrane. Visual pigments are the light-absorbing molecules that mediate vision. They consist of an apoprotein, opsin, covalently linked to 11-cis-retinal. This Apis mellifera (Honeybee) protein is Opsin, ultraviolet-sensitive (UVOP).